The primary structure comprises 725 residues: FYVE, RhoGEF and PH domain-containing protein 3 (725 aa).

The tract at residues Met-1–Gln-151 is disordered. Residues Glu-124–Ser-136 show a composition bias toward acidic residues. The residue at position 128 (Ser-128) is a Phosphoserine. Residues Lys-157–Ala-341 enclose the DH domain. A PH 1 domain is found at Glu-370–Glu-469. The disordered stretch occupies residues Gln-487 to Asp-532. The segment covering Thr-500–Glu-512 has biased composition (low complexity). A compositionally biased stretch (basic and acidic residues) spans Glu-521–Asp-532. The FYVE-type zinc-finger motif lies at Asp-532–Pro-588. Zn(2+)-binding residues include Cys-538, Cys-541, Cys-555, Cys-558, Cys-563, Cys-566, Cys-580, and Cys-583. The 100-residue stretch at Pro-604–His-703 folds into the PH 2 domain. Residues His-703–Pro-725 form a disordered region.

The protein resides in the cytoplasm. It localises to the cytoskeleton. Promotes the formation of filopodia. May activate CDC42, a member of the Ras-like family of Rho- and Rac proteins, by exchanging bound GDP for free GTP. Plays a role in regulating the actin cytoskeleton and cell shape. The protein is FYVE, RhoGEF and PH domain-containing protein 3 (FGD3) of Homo sapiens (Human).